A 751-amino-acid chain; its full sequence is Catalase-peroxidase (751 aa).

The tryptophyl-tyrosyl-methioninium (Trp-Tyr) (with M-266) cross-link spans 92-240 (WHSAGTYRVT…VAAAHMGLIY (149 aa)). His93 serves as the catalytic Proton acceptor. The tryptophyl-tyrosyl-methioninium (Tyr-Met) (with W-92) cross-link spans 240–266 (YVNPEGPDGVPDPIAAARDIRTTFHRM). His281 lines the heme b pocket.

Belongs to the peroxidase family. Peroxidase/catalase subfamily. As to quaternary structure, homodimer or homotetramer. Requires heme b as cofactor. Post-translationally, formation of the three residue Trp-Tyr-Met cross-link is important for the catalase, but not the peroxidase activity of the enzyme.

The protein localises to the cytoplasm. It carries out the reaction H2O2 + AH2 = A + 2 H2O. It catalyses the reaction 2 H2O2 = O2 + 2 H2O. Functionally, bifunctional enzyme with both catalase and broad-spectrum peroxidase activity. The polypeptide is Catalase-peroxidase (Phaeosphaeria nodorum (strain SN15 / ATCC MYA-4574 / FGSC 10173) (Glume blotch fungus)).